Reading from the N-terminus, the 290-residue chain is PIH1 domain-containing protein 1 (290 aa).

Phosphoserine is present on residues Ser12, Ser16, and Ser173.

Belongs to the PIH1 family. Component of the R2TP complex composed at least of RUVBL1, RUVBL2, RPAP3 and PIHD1. Component of the PAQosome complex which is responsible for the biogenesis of several protein complexes and which consists of R2TP complex members RUVBL1, RUVBL2, RPAP3 and PIH1D1, URI complex members PFDN2, PFDN6, PDRG1, UXT and URI1 as well as ASDURF, POLR2E and DNAAF10/WDR92. Interacts with phosphorylated TELO2 and mediates interaction of TELO2 with the R2TP complex. Interacts with phosphorylated ECD, EFTUD2/SNRP116, RPB1 and UBR5 and with RPB1 in a phosphorylation-independent manner. Interacts with the core C/D box snoRNP particle components NOP58 and FBL and with RUVBL1/TIP49. Interacts with RPAP3 and DNAAF10. Interacts with histone H4 and with SWI/SNF complex member SMARCB1/SNF5. Interacts with the mTORC1 complex member RPTOR. Interacts with MSL1.

It localises to the nucleus. Functionally, involved in the assembly of C/D box small nucleolar ribonucleoprotein (snoRNP) particles. Recruits the SWI/SNF complex to the core promoter of rRNA genes and enhances pre-rRNA transcription. Mediates interaction of TELO2 with the R2TP complex which is necessary for the stability of MTOR and SMG1. Positively regulates the assembly and activity of the mTORC1 complex. This Rattus norvegicus (Rat) protein is PIH1 domain-containing protein 1 (Pih1d1).